The following is a 188-amino-acid chain: Adenine phosphoribosyltransferase (188 aa).

This sequence belongs to the purine/pyrimidine phosphoribosyltransferase family. Homodimer.

Its subcellular location is the cytoplasm. The catalysed reaction is AMP + diphosphate = 5-phospho-alpha-D-ribose 1-diphosphate + adenine. The protein operates within purine metabolism; AMP biosynthesis via salvage pathway; AMP from adenine: step 1/1. Functionally, catalyzes a salvage reaction resulting in the formation of AMP, that is energically less costly than de novo synthesis. This chain is Adenine phosphoribosyltransferase, found in Burkholderia cenocepacia (strain HI2424).